The chain runs to 336 residues: uncharacterized protein (336 aa).

Positions 1–23 (MKTRHLVYLAFALLGLGLAGLLE) are cleaved as a signal peptide. The next 3 membrane-spanning stretches (helical) occupy residues 34–54 (LLSL…LLLG), 75–95 (VVVA…LLTT), and 106–126 (VHSL…ALGY). Residues 144–255 (VLDTSVLVDG…MARIYGVKAL (112 aa)) form the PINc domain. D222 contributes to the Mg(2+) binding site. Residues 267–328 (QLQVGDTLKL…IQTQVGRLFF (62 aa)) form the TRAM domain.

This sequence belongs to the PINc/VapC protein family. The cofactor is Mg(2+).

It localises to the membrane. Functionally, part of a toxin-antitoxin (TA) system. An RNase. This is an uncharacterized protein from Thermus thermophilus (strain ATCC 27634 / DSM 579 / HB8).